The primary structure comprises 142 residues: Large ribosomal subunit protein uL11 (142 aa).

Belongs to the universal ribosomal protein uL11 family. Part of the ribosomal stalk of the 50S ribosomal subunit. Interacts with L10 and the large rRNA to form the base of the stalk. L10 forms an elongated spine to which L12 dimers bind in a sequential fashion forming a multimeric L10(L12)X complex. Post-translationally, one or more lysine residues are methylated.

Its function is as follows. Forms part of the ribosomal stalk which helps the ribosome interact with GTP-bound translation factors. The polypeptide is Large ribosomal subunit protein uL11 (Bartonella henselae (strain ATCC 49882 / DSM 28221 / CCUG 30454 / Houston 1) (Rochalimaea henselae)).